The chain runs to 103 residues: Zinc-containing ferredoxin (103 aa).

The interval 1–36 (GIDPNYRTSKPVVGDHSGHKIYGPVESPKVLGVHGT) is N-terminal extension. His-19 is a Zn(2+) binding site. At Lys-29 the chain carries N6-methyllysine. His-34 is a Zn(2+) binding site. 2 4Fe-4S ferredoxin-type domains span residues 35–65 (GTIV…WYET) and 74–103 (KADP…VKPP). Residues Cys-45 and Cys-51 each contribute to the [3Fe-4S] cluster site. Cys-55 lines the [4Fe-4S] cluster pocket. Position 76 (Asp-76) interacts with Zn(2+). Positions 83, 86, and 89 each coordinate [4Fe-4S] cluster. Cys-93 provides a ligand contact to [3Fe-4S] cluster.

[3Fe-4S] cluster serves as cofactor. [4Fe-4S] cluster is required as a cofactor. It depends on Zn(2+) as a cofactor.

Ferredoxins are iron-sulfur proteins that transfer electrons in a wide variety of metabolic reactions. The protein is Zinc-containing ferredoxin (zfx) of Sulfolobus acidocaldarius (strain ATCC 33909 / DSM 639 / JCM 8929 / NBRC 15157 / NCIMB 11770).